We begin with the raw amino-acid sequence, 328 residues long: Alanine racemase (328 aa).

K33 acts as the Proton acceptor; specific for D-alanine in catalysis. K33 carries the N6-(pyridoxal phosphate)lysine modification. R118 contacts substrate. Y237 acts as the Proton acceptor; specific for L-alanine in catalysis. Substrate is bound at residue M283.

It belongs to the alanine racemase family. Requires pyridoxal 5'-phosphate as cofactor.

The enzyme catalyses L-alanine = D-alanine. It participates in amino-acid biosynthesis; D-alanine biosynthesis; D-alanine from L-alanine: step 1/1. In terms of biological role, catalyzes the interconversion of L-alanine and D-alanine. May also act on other amino acids. This Campylobacter jejuni subsp. jejuni serotype O:2 (strain ATCC 700819 / NCTC 11168) protein is Alanine racemase (alr).